A 240-amino-acid polypeptide reads, in one-letter code: LexA repressor (240 aa).

Residues 26–46 (FDEMKEALDLASKSGIHRLIT) constitute a DNA-binding region (H-T-H motif). Active-site for autocatalytic cleavage activity residues include Ser-161 and Lys-199.

It belongs to the peptidase S24 family. Homodimer.

The catalysed reaction is Hydrolysis of Ala-|-Gly bond in repressor LexA.. Functionally, represses a number of genes involved in the response to DNA damage (SOS response), including recA and lexA. In the presence of single-stranded DNA, RecA interacts with LexA causing an autocatalytic cleavage which disrupts the DNA-binding part of LexA, leading to derepression of the SOS regulon and eventually DNA repair. This is LexA repressor from Brucella ovis (strain ATCC 25840 / 63/290 / NCTC 10512).